A 265-amino-acid polypeptide reads, in one-letter code: Enolase-phosphatase E1 (265 aa).

The Mg(2+) site is built by D18 and E20. Substrate-binding positions include 144-145 and K188; that span reads SS. Residue D215 participates in Mg(2+) binding.

Belongs to the HAD-like hydrolase superfamily. MasA/MtnC family. Monomer. It depends on Mg(2+) as a cofactor.

It is found in the cytoplasm. The protein localises to the nucleus. The catalysed reaction is 5-methylsulfanyl-2,3-dioxopentyl phosphate + H2O = 1,2-dihydroxy-5-(methylsulfanyl)pent-1-en-3-one + phosphate. It functions in the pathway amino-acid biosynthesis; L-methionine biosynthesis via salvage pathway; L-methionine from S-methyl-5-thio-alpha-D-ribose 1-phosphate: step 3/6. Its pathway is amino-acid biosynthesis; L-methionine biosynthesis via salvage pathway; L-methionine from S-methyl-5-thio-alpha-D-ribose 1-phosphate: step 4/6. In terms of biological role, bifunctional enzyme that catalyzes the enolization of 2,3-diketo-5-methylthiopentyl-1-phosphate (DK-MTP-1-P) into the intermediate 2-hydroxy-3-keto-5-methylthiopentenyl-1-phosphate (HK-MTPenyl-1-P), which is then dephosphorylated to form the acireductone 1,2-dihydroxy-3-keto-5-methylthiopentene (DHK-MTPene). In Candida albicans (strain SC5314 / ATCC MYA-2876) (Yeast), this protein is Enolase-phosphatase E1.